Consider the following 339-residue polypeptide: Putative P2Y purinoceptor 10 (339 aa).

Residues 1–39 (MANLDKYTETFKMGSNSTSTAEIYCNVTNVKFQYSLYAT) lie on the Extracellular side of the membrane. Residues N16 and N26 are each glycosylated (N-linked (GlcNAc...) asparagine). Residues 40-60 (TYILIFIPGLLANSAALWVLC) form a helical membrane-spanning segment. At 61 to 68 (RFISKKNK) the chain is on the cytoplasmic side. Residues 69–89 (AIIFMINLSVADLAHVLSLPL) form a helical membrane-spanning segment. At 90 to 103 (RIYYYISHHWPFQR) the chain is on the extracellular side. The chain crosses the membrane as a helical span at residues 104 to 124 (ALCLLCFYLKYLNMYASICFL). C106 and C181 are joined by a disulfide. Residues 125 to 149 (TCISLQRCFFLLKPFRARDWKRRYD) lie on the Cytoplasmic side of the membrane. The helical transmembrane segment at 150-170 (VGISAAIWIVVGTACLPFPIL) threads the bilayer. Topologically, residues 171–193 (RSTDLNNNKSCFADLGYKQMNAV) are extracellular. N-linked (GlcNAc...) asparagine glycosylation is present at N178. The helical transmembrane segment at 194 to 214 (ALVGMITVAELAGFVIPVIII) threads the bilayer. Residues 215–244 (AWCTWKTTISLRQPPMAFQGISERQKALRM) are Cytoplasmic-facing. The chain crosses the membrane as a helical span at residues 245–265 (VFMCAAVFFICFTPYHINFIF). The Extracellular portion of the chain corresponds to 266–288 (YTMVKETIISSCPVVRIALYFHP). The helical transmembrane segment at 289–309 (FCLCLASLCCLLDPILYYFMA) threads the bilayer. Over 310 to 339 (SEFRDQLSRHGSSVTRSRLMSKESGSSMIG) the chain is Cytoplasmic.

The protein belongs to the G-protein coupled receptor 1 family. Weakly expressed in blood leukocytes.

Its subcellular location is the cell membrane. Putative receptor for purines coupled to G-proteins. This Homo sapiens (Human) protein is Putative P2Y purinoceptor 10 (P2RY10).